The following is a 249-amino-acid chain: Exosome complex component Rrp41 (249 aa).

The protein belongs to the RNase PH family. Rrp41 subfamily. As to quaternary structure, component of the archaeal exosome complex. Forms a hexameric ring-like arrangement composed of 3 Rrp41-Rrp42 heterodimers. The hexameric ring associates with a trimer of Rrp4 and/or Csl4 subunits.

The protein resides in the cytoplasm. Catalytic component of the exosome, which is a complex involved in RNA degradation. Has 3'-&gt;5' exoribonuclease activity. Can also synthesize heteromeric RNA-tails. The polypeptide is Exosome complex component Rrp41 (Pyrococcus abyssi (strain GE5 / Orsay)).